Reading from the N-terminus, the 216-residue chain is Uracil phosphoribosyltransferase (216 aa).

Residues R32, R41, 75 to 78, and K77 each bind GTP; that span reads LGKI. R85 provides a ligand contact to 5-phospho-alpha-D-ribose 1-diphosphate. Position 102 (R102) interacts with GTP. R110 serves as a coordination point for 5-phospho-alpha-D-ribose 1-diphosphate. R131 contacts GTP. 5-phospho-alpha-D-ribose 1-diphosphate is bound by residues D137 and 137–145; that span reads DPMLATGGS. Y201 contacts D-ribose 5-phosphate. Uracil contacts are provided by residues L202 and 207 to 209; that span reads GDF. A 5-phospho-alpha-D-ribose 1-diphosphate-binding site is contributed by D208.

Belongs to the UPRTase family. Requires Mg(2+) as cofactor.

The catalysed reaction is UMP + diphosphate = 5-phospho-alpha-D-ribose 1-diphosphate + uracil. The protein operates within pyrimidine metabolism; UMP biosynthesis via salvage pathway; UMP from uracil: step 1/1. Allosterically activated by GTP. Its function is as follows. Catalyzes the conversion of uracil and 5-phospho-alpha-D-ribose 1-diphosphate (PRPP) to UMP and diphosphate. The sequence is that of Uracil phosphoribosyltransferase (FUR1) from Lachancea kluyveri (Yeast).